The following is a 252-amino-acid chain: 3-dehydroquinate dehydratase (252 aa).

3-dehydroquinate-binding positions include 46 to 48 (EWR) and R82. H143 (proton donor/acceptor) is an active-site residue. The active-site Schiff-base intermediate with substrate is the K170. 3-dehydroquinate is bound by residues R212, S231, and Q235.

This sequence belongs to the type-I 3-dehydroquinase family. In terms of assembly, homodimer.

The enzyme catalyses 3-dehydroquinate = 3-dehydroshikimate + H2O. It functions in the pathway metabolic intermediate biosynthesis; chorismate biosynthesis; chorismate from D-erythrose 4-phosphate and phosphoenolpyruvate: step 3/7. Involved in the third step of the chorismate pathway, which leads to the biosynthesis of aromatic amino acids. Catalyzes the cis-dehydration of 3-dehydroquinate (DHQ) and introduces the first double bond of the aromatic ring to yield 3-dehydroshikimate. This Listeria welshimeri serovar 6b (strain ATCC 35897 / DSM 20650 / CCUG 15529 / CIP 8149 / NCTC 11857 / SLCC 5334 / V8) protein is 3-dehydroquinate dehydratase.